A 382-amino-acid polypeptide reads, in one-letter code: Mannitol-1-phosphate 5-dehydrogenase (382 aa).

4 to 15 (AVHFGAGNIGRG) serves as a coordination point for NAD(+).

This sequence belongs to the mannitol dehydrogenase family.

The enzyme catalyses D-mannitol 1-phosphate + NAD(+) = beta-D-fructose 6-phosphate + NADH + H(+). The protein is Mannitol-1-phosphate 5-dehydrogenase of Vibrio vulnificus (strain CMCP6).